Here is a 57-residue protein sequence, read N- to C-terminus: Aminopeptidase A (57 aa).

The Extracellular segment spans residues 1-57; the sequence is YLTDHYFKVDLNSTVTQQRFLLDPSELAGITIMQPSDSNIEWLKQYRDDVATWLENS. N-linked (GlcNAc...) asparagine glycosylation is present at Asn12.

It belongs to the peptidase M1 family. Homodimer; disulfide-linked. Requires Zn(2+) as cofactor.

Its subcellular location is the cell membrane. It carries out the reaction Release of N-terminal glutamate (and to a lesser extent aspartate) from a peptide.. Inhibited by the aminopeptidase competitive inhibitors amastatin (Leu and acidic inhibitor), and bestatin (Leu inhibitor), by chelating agents EDTA, and 1,10-Phenanthroline, as well as by Zn(2+) ions. Substrate specificity is modulated by Ca(2+), Ba(2+), and Mn(2+) ions which enhances the enzymatic activity for cleavage of acidic residues. Its function is as follows. Venom protein that cleaves N-terminal acidic residues from peptides with high potency in presence of calcium. It may have several roles in venom including alteration of blood pressure by cleaving circulating angiotensin-2, general degradation of host tissue, increase of permeability to other venom components, and/or processing of other toxins in the venom. The chain is Aminopeptidase A from Gloydius blomhoffii (Mamushi).